The primary structure comprises 185 residues: Lipid A acyltransferase PagP (185 aa).

Residues 1–14 form the signal peptide; it reads MKLKPVLYLLMLLG. A lipid anchor (N-palmitoyl cysteine) is attached at Cys-15. Residue Cys-15 is the site of S-diacylglycerol cysteine attachment. Active-site residues include His-57, Asp-100, and Ser-101.

It belongs to the lipid A palmitoyltransferase family. Homodimer.

It is found in the cell outer membrane. The catalysed reaction is a lipid A + a 1,2-diacyl-sn-glycero-3-phosphocholine = a hepta-acyl lipid A + a 2-acyl-sn-glycero-3-phosphocholine. It carries out the reaction a lipid IVA + a 1,2-diacyl-sn-glycero-3-phosphocholine = a lipid IVB + a 2-acyl-sn-glycero-3-phosphocholine. The enzyme catalyses a lipid IIA + a 1,2-diacyl-sn-glycero-3-phosphocholine = a lipid IIB + a 2-acyl-sn-glycero-3-phosphocholine. In terms of biological role, transfers a fatty acid residue from the sn-1 position of a phospholipid to the N-linked hydroxyfatty acid chain on the proximal unit of lipid A or its precursors. In Erwinia pyrifoliae (strain DSM 12163 / CIP 106111 / Ep16/96), this protein is Lipid A acyltransferase PagP.